Consider the following 379-residue polypeptide: tRNA-specific 2-thiouridylase MnmA (379 aa).

Residues 6-13 (AMSGGVDS) and L32 each bind ATP. The Nucleophile role is filled by C101. C101 and C199 are disulfide-bonded. G125 is an ATP binding site. The interaction with tRNA stretch occupies residues 148 to 150 (KDQ). C199 functions as the Cysteine persulfide intermediate in the catalytic mechanism.

The protein belongs to the MnmA/TRMU family.

It localises to the cytoplasm. It carries out the reaction S-sulfanyl-L-cysteinyl-[protein] + uridine(34) in tRNA + AH2 + ATP = 2-thiouridine(34) in tRNA + L-cysteinyl-[protein] + A + AMP + diphosphate + H(+). Catalyzes the 2-thiolation of uridine at the wobble position (U34) of tRNA, leading to the formation of s(2)U34. This is tRNA-specific 2-thiouridylase MnmA from Arthrobacter sp. (strain FB24).